A 337-amino-acid chain; its full sequence is Ferredoxin--NADP reductase (337 aa).

Residues Asp33, Gln41, Tyr46, Ala86, Phe120, Asp286, and Thr327 each coordinate FAD.

Belongs to the ferredoxin--NADP reductase type 2 family. In terms of assembly, homodimer. FAD is required as a cofactor.

The enzyme catalyses 2 reduced [2Fe-2S]-[ferredoxin] + NADP(+) + H(+) = 2 oxidized [2Fe-2S]-[ferredoxin] + NADPH. The polypeptide is Ferredoxin--NADP reductase (Rickettsia canadensis (strain McKiel)).